The sequence spans 879 residues: Alanine--tRNA ligase (879 aa).

Zn(2+) is bound by residues H567, H571, C669, and H673.

The protein belongs to the class-II aminoacyl-tRNA synthetase family. It depends on Zn(2+) as a cofactor.

Its subcellular location is the cytoplasm. The catalysed reaction is tRNA(Ala) + L-alanine + ATP = L-alanyl-tRNA(Ala) + AMP + diphosphate. Its function is as follows. Catalyzes the attachment of alanine to tRNA(Ala) in a two-step reaction: alanine is first activated by ATP to form Ala-AMP and then transferred to the acceptor end of tRNA(Ala). Also edits incorrectly charged Ser-tRNA(Ala) and Gly-tRNA(Ala) via its editing domain. This Lactobacillus helveticus (strain DPC 4571) protein is Alanine--tRNA ligase.